We begin with the raw amino-acid sequence, 275 residues long: WIMGHMVNSIEQVDKFLDLGANAIEFDVDFDDDGVAKYTHHGIPCDCGRLCNKYAVFTEYLDYVRQVTTPGDPKFRKELVLLALDLKLQRISSEKAYAAGVDVATKLLDHYWMRGKNGGRAYILLNIPLVKHYEFIRAFKDTLRKEGHEQYNAKVGINFTGNEDLDEIRKVLEKLGEDEHIWQADGIASCIPRGTERLKKVLEKRDTPGYKYISKVYAWTLVRSSIMRRSLSLGVDGVMSNYPDIVVKVLKEKKFSDKFRLATYADNPWEKFTPI.

H5 is an active-site residue. Residues E25 and D27 each coordinate Mg(2+). H41 functions as the Nucleophile in the catalytic mechanism. 2 disulfide bridges follow: C45/C51 and C47/C190. D85 is a binding site for Mg(2+).

It belongs to the arthropod phospholipase D family. Class II subfamily. Mg(2+) serves as cofactor. Expressed by the venom gland.

Its subcellular location is the secreted. It catalyses the reaction an N-(acyl)-sphingosylphosphocholine = an N-(acyl)-sphingosyl-1,3-cyclic phosphate + choline. The catalysed reaction is an N-(acyl)-sphingosylphosphoethanolamine = an N-(acyl)-sphingosyl-1,3-cyclic phosphate + ethanolamine. It carries out the reaction a 1-acyl-sn-glycero-3-phosphocholine = a 1-acyl-sn-glycero-2,3-cyclic phosphate + choline. The enzyme catalyses a 1-acyl-sn-glycero-3-phosphoethanolamine = a 1-acyl-sn-glycero-2,3-cyclic phosphate + ethanolamine. Dermonecrotic toxins cleave the phosphodiester linkage between the phosphate and headgroup of certain phospholipids (sphingolipid and lysolipid substrates), forming an alcohol (often choline) and a cyclic phosphate. This toxin acts on sphingomyelin (SM). It may also act on ceramide phosphoethanolamine (CPE), lysophosphatidylcholine (LPC) and lysophosphatidylethanolamine (LPE), but not on lysophosphatidylserine (LPS), and lysophosphatidylglycerol (LPG). It acts by transphosphatidylation, releasing exclusively cyclic phosphate products as second products. Induces dermonecrosis, hemolysis, increased vascular permeability, edema, inflammatory response, and platelet aggregation. The protein is Dermonecrotic toxin SpeSicTox-betaIIA1 of Sicarius peruensis (Six-eyed sand spider).